The following is a 525-amino-acid chain: CBL-interacting protein kinase 21 (525 aa).

In terms of domain architecture, Protein kinase spans 87 to 342 (YEMGRALGEG…ITGIRAHEWF (256 aa)). ATP contacts are provided by residues 93–101 (LGEGHFGKV) and lysine 116. Aspartate 210 functions as the Proton acceptor in the catalytic mechanism. The segment at 228-257 (DFGLSALPQNQRKDGLLHTTCGSPNYIAPE) is activation loop. The NAF domain maps to 372-401 (DIETSPAISQINAFQLIGMSSCLDLSGFFE). The PPI stretch occupies residues 407 to 436 (ERKIRFVSNYSPTSLFEKIESTVTEKGFQV).

It belongs to the protein kinase superfamily. CAMK Ser/Thr protein kinase family. SNF1 subfamily. Requires Mn(2+) as cofactor.

It carries out the reaction L-seryl-[protein] + ATP = O-phospho-L-seryl-[protein] + ADP + H(+). The enzyme catalyses L-threonyl-[protein] + ATP = O-phospho-L-threonyl-[protein] + ADP + H(+). Its function is as follows. CIPK serine-threonine protein kinases interact with CBL proteins. Binding of a CBL protein to the regulatory NAF domain of CIPK protein lead to the activation of the kinase in a calcium-dependent manner. The polypeptide is CBL-interacting protein kinase 21 (CIPK21) (Oryza sativa subsp. japonica (Rice)).